An 87-amino-acid polypeptide reads, in one-letter code: U9-ctenitoxin-Pn1a (87 aa).

The signal sequence occupies residues 1-22 (MWLKTQLFVLAIAVIALLEVHA). The propeptide occupies 23 to 37 (EPESNDNNELVVEEA). 4 disulfides stabilise this stretch: Cys-40–Cys-54, Cys-47–Cys-64, Cys-53–Cys-73, and Cys-66–Cys-71. The propeptide occupies 75–87 (KSLREMAAAAFGR).

It belongs to the neurotoxin 02 (plectoxin) family. 01 (Tx3) subfamily. Expressed by the venom gland.

The protein resides in the secreted. Its function is as follows. Antagonist of L-type calcium channels (Cav1/CACNA1). The chain is U9-ctenitoxin-Pn1a from Phoneutria nigriventer (Brazilian armed spider).